The following is a 425-amino-acid chain: Histidine--tRNA ligase (425 aa).

It belongs to the class-II aminoacyl-tRNA synthetase family. In terms of assembly, homodimer.

It localises to the cytoplasm. It carries out the reaction tRNA(His) + L-histidine + ATP = L-histidyl-tRNA(His) + AMP + diphosphate + H(+). This is Histidine--tRNA ligase from Buchnera aphidicola subsp. Baizongia pistaciae (strain Bp).